The primary structure comprises 97 residues: Co-chaperonin GroES (97 aa).

Belongs to the GroES chaperonin family. As to quaternary structure, heptamer of 7 subunits arranged in a ring. Interacts with the chaperonin GroEL.

Its subcellular location is the cytoplasm. Together with the chaperonin GroEL, plays an essential role in assisting protein folding. The GroEL-GroES system forms a nano-cage that allows encapsulation of the non-native substrate proteins and provides a physical environment optimized to promote and accelerate protein folding. GroES binds to the apical surface of the GroEL ring, thereby capping the opening of the GroEL channel. This is Co-chaperonin GroES from Buchnera aphidicola subsp. Cinara cedri (strain Cc).